The sequence spans 312 residues: Ribonuclease HIII (312 aa).

In terms of domain architecture, RNase H type-2 spans 95–311; it reads FNCIGSDEAG…REKAQKILKP (217 aa). Asp-101, Glu-102, and Asp-206 together coordinate a divalent metal cation.

This sequence belongs to the RNase HII family. RnhC subfamily. It depends on Mn(2+) as a cofactor. Requires Mg(2+) as cofactor.

It is found in the cytoplasm. It catalyses the reaction Endonucleolytic cleavage to 5'-phosphomonoester.. Endonuclease that specifically degrades the RNA of RNA-DNA hybrids. The chain is Ribonuclease HIII from Staphylococcus aureus (strain MW2).